We begin with the raw amino-acid sequence, 102 residues long: RNA-binding protein Hfq (102 aa).

One can recognise a Sm domain in the interval 9-68; that stretch reads DPFLNALRRERVPVSIYLVNGIKLQGQIESFDQFVILLKNTVSQMVYKHAISTVVPSRPV. The tract at residues 63–102 is disordered; sequence VPSRPVSHHSNNAGGGTSSNYHHGSSPQNTSAQQDSEETE. The span at 70 to 96 shows a compositional bias: polar residues; sequence HHSNNAGGGTSSNYHHGSSPQNTSAQQ.

The protein belongs to the Hfq family. As to quaternary structure, homohexamer.

In terms of biological role, RNA chaperone that binds small regulatory RNA (sRNAs) and mRNAs to facilitate mRNA translational regulation in response to envelope stress, environmental stress and changes in metabolite concentrations. Also binds with high specificity to tRNAs. This is RNA-binding protein Hfq from Shigella dysenteriae serotype 1 (strain Sd197).